Reading from the N-terminus, the 387-residue chain is 8-amino-7-oxononanoate synthase (387 aa).

Position 19 (R19) interacts with substrate. 106–107 (GY) contributes to the pyridoxal 5'-phosphate binding site. Residue H131 participates in substrate binding. Residues S177, H205, and T236 each contribute to the pyridoxal 5'-phosphate site. K239 is modified (N6-(pyridoxal phosphate)lysine). T353 serves as a coordination point for substrate.

This sequence belongs to the class-II pyridoxal-phosphate-dependent aminotransferase family. BioF subfamily. Homodimer. Requires pyridoxal 5'-phosphate as cofactor.

It carries out the reaction 6-carboxyhexanoyl-[ACP] + L-alanine + H(+) = (8S)-8-amino-7-oxononanoate + holo-[ACP] + CO2. The protein operates within cofactor biosynthesis; biotin biosynthesis. Its function is as follows. Catalyzes the decarboxylative condensation of pimeloyl-[acyl-carrier protein] and L-alanine to produce 8-amino-7-oxononanoate (AON), [acyl-carrier protein], and carbon dioxide. The protein is 8-amino-7-oxononanoate synthase of Nitrosomonas europaea (strain ATCC 19718 / CIP 103999 / KCTC 2705 / NBRC 14298).